Consider the following 883-residue polypeptide: Pre-mRNA-splicing factor syf1 homolog (883 aa).

12 HAT repeats span residues 13-45, 46-78, 88-120, 122-156, 158-190, 268-303, 368-406, 463-495, 531-565, 570-604, 642-676, and 678-712; these read INFEVEDVPYEEEILRNAYSVKHWLRYIDHKAK, APNNGVNMVYERALKELPGSYKIWHNYLRTRRK, PMYEEVNSAFERALVFMHKMPRIWMDYGAFMTS, CKITRTRHVFDRALRALPITQHGRIWPLYLQFVRR, EMPETALRVYRRYLKLFPEDTEEYVDYLQEADR, GLFDRARDIYEEAIQTVTTVRDFTQVFDEYAQFEEL, DKPAEIISTYTEAVQTVQPKQAVGKLHTLWVEFAKFYEA, KRKIAYYDDTETVQARLHRSLKVWSMYADLEES, NYFEEAYRAYEKGISLFKWPNVYDIWNSYLTKFLE, TKLERARDLFEQCLDQCPPEHAKYFYLLYAKLEEE, YGLPRTREIYEKAIESLPEQNMRHMCVKFAELETK, and GEVDRARAIYAHCSQVCDPRITADFWQTWKEFEVR. 2 disordered regions span residues 794-851 and 864-883; these read RGET…DEEG and IPAKVFGSLKPSNQGDSDGE. The span at 812–834 shows a compositional bias: acidic residues; it reads DEIDIGDSDEDDEEEDDDEENEM. 2 stretches are compositionally biased toward polar residues: residues 835–844 and 873–883; these read TNENQASAAV and KPSNQGDSDGE.

Belongs to the crooked-neck family. As to quaternary structure, component of the NTC(Nineteen)/Prp19 complex composed of at least fand, Prp19,CG9667/ISY1 and Cdc5/CDC5L. Within the complex, interacts with Prp19 and ISY1/CG9667.

The protein localises to the nucleus. Its function is as follows. Subunit of the NTC(Nineteen)/Prp19 complex, which is part of the spliceosome. The complex participates in spliceosome assembly, its remodeling and is required for efficient spliceosome activation. Essential for efficient pre-mRNA splicing. In embryos, efficient pre-mRNA splicing of zygotic transcripts is essential during dynamic cellular processes that require rapid division and/or dramatic changes in gene expression such as blastoderm cellularization, tracheal branching morphogenesis, Malpighian morphogenesis and epidermal development. Part of its role in promoting embryo tracheal development is also due to specifically splicing bnl transcripts which results in the activation of the BNL-FGF pathway. The protein is Pre-mRNA-splicing factor syf1 homolog of Drosophila melanogaster (Fruit fly).